The primary structure comprises 63 residues: Large ribosomal subunit protein bL32 (63 aa).

The tract at residues 1-27 (MANPKAKMSKSRRDKRRAQFNARTKPV) is disordered. Positions 7-18 (KMSKSRRDKRRA) are enriched in basic residues.

This sequence belongs to the bacterial ribosomal protein bL32 family.

The sequence is that of Large ribosomal subunit protein bL32 from Chlorobium phaeobacteroides (strain DSM 266 / SMG 266 / 2430).